A 237-amino-acid polypeptide reads, in one-letter code: Phosphoribosylaminoimidazole-succinocarboxamide synthase (237 aa).

This sequence belongs to the SAICAR synthetase family.

It catalyses the reaction 5-amino-1-(5-phospho-D-ribosyl)imidazole-4-carboxylate + L-aspartate + ATP = (2S)-2-[5-amino-1-(5-phospho-beta-D-ribosyl)imidazole-4-carboxamido]succinate + ADP + phosphate + 2 H(+). It participates in purine metabolism; IMP biosynthesis via de novo pathway; 5-amino-1-(5-phospho-D-ribosyl)imidazole-4-carboxamide from 5-amino-1-(5-phospho-D-ribosyl)imidazole-4-carboxylate: step 1/2. The sequence is that of Phosphoribosylaminoimidazole-succinocarboxamide synthase from Alteromonas mediterranea (strain DSM 17117 / CIP 110805 / LMG 28347 / Deep ecotype).